Consider the following 411-residue polypeptide: MVHKKKNVDIPSSQKYLGIQHVNFYSNAFGKESLRFQLRELILPIVRKETRLLYKIQSFFRNPWLDVYFMYTATLGTHVFFMLALPIFFWSGCIYYTLDITQLFAAGVYFSGCIKDYFCLPRPRSPPMVRLTLSSDAEYEYGFPSTHTTNAMATGFYSLFLLLSMSDSMSSISYYFLLSLVLLYIASISLGRIYCGMHGFMDVSTGTILGVTLAIFQWKYADFFHNVWSSSSTSVPILSVVLALFFIWFHPQPAERCICLEDSISFISVIMGIDLGTWFASPESLSHLHDNLNSYFLLKFFVRVLFGVCMILIWKSFAKQALLAVLPPIFKSLRLSYLEPKSQSEKGIRAATGSNHSPGNIGTELGVITSHQSHPHPVRFDIETIARIIVYSGIGFLCTYFAPKVFLKWKI.

Residues 1-74 are Lumenal-facing; it reads MVHKKKNVDI…LDVYFMYTAT (74 aa). A helical membrane pass occupies residues 75 to 95; that stretch reads LGTHVFFMLALPIFFWSGCIY. At 96–99 the chain is on the cytoplasmic side; it reads YTLD. A helical membrane pass occupies residues 100 to 120; that stretch reads ITQLFAAGVYFSGCIKDYFCL. Residues 115-123 are phosphatase sequence motif I; the sequence is KDYFCLPRP. Over 121 to 170 the chain is Lumenal; it reads PRPRSPPMVRLTLSSDAEYEYGFPSTHTTNAMATGFYSLFLLLSMSDSMS. Residues 144–147 form a phosphatase sequence motif II region; it reads PSTH. The active-site Proton donor is the histidine 147. A helical membrane pass occupies residues 171–191; the sequence is SISYYFLLSLVLLYIASISLG. The tract at residues 191–202 is phosphatase sequence motif III; that stretch reads GRIYCGMHGFMD. At 192–195 the chain is on the cytoplasmic side; it reads RIYC. A helical membrane pass occupies residues 196–216; the sequence is GMHGFMDVSTGTILGVTLAIF. The active-site Nucleophile is the histidine 198. The Lumenal portion of the chain corresponds to 217–233; the sequence is QWKYADFFHNVWSSSST. A helical transmembrane segment spans residues 234 to 254; it reads SVPILSVVLALFFIWFHPQPA. At 255–259 the chain is on the cytoplasmic side; it reads ERCIC. A helical membrane pass occupies residues 260 to 280; it reads LEDSISFISVIMGIDLGTWFA. The Lumenal portion of the chain corresponds to 281-293; that stretch reads SPESLSHLHDNLN. Residues 294 to 314 form a helical membrane-spanning segment; the sequence is SYFLLKFFVRVLFGVCMILIW. The Cytoplasmic portion of the chain corresponds to 315-387; sequence KSFAKQALLA…VRFDIETIAR (73 aa). The chain crosses the membrane as a helical span at residues 388–408; that stretch reads IIVYSGIGFLCTYFAPKVFLK. Residues 409-411 are Lumenal-facing; that stretch reads WKI.

It belongs to the type 2 lipid phosphate phosphatase family.

It is found in the endoplasmic reticulum membrane. Functionally, dihydrosphingosine 1-phosphate phosphatase required for efficient ceramide synthesis from exogenous sphingoid bases. Involved in endocytosis and calcium-mediated signaling. The sequence is that of Dihydrosphingosine 1-phosphate phosphatase C823.11 from Schizosaccharomyces pombe (strain 972 / ATCC 24843) (Fission yeast).